The primary structure comprises 398 residues: E3 ubiquitin-protein ligase ATL6 (398 aa).

Residues 1–29 (MRSSDHMAFAGVLPIVFLLILSSADLAAS) form the signal peptide. Residues 50–70 (AVIVVILIAALFFMGFFSIYF) form a helical membrane-spanning segment. The RING-type; atypical zinc finger occupies 128 to 170 (CAICLNEFEDDETLRLLPKCDHVFHPHCIDAWLEAHVTCPVCR). Ser278 bears the Phosphoserine mark. The interval 368–398 (PRGGVNKDGEGTSVKSTGASGSTSGSVRLPV) is disordered. A compositionally biased stretch (low complexity) spans 378-398 (GTSVKSTGASGSTSGSVRLPV).

Belongs to the RING-type zinc finger family. ATL subfamily.

Its subcellular location is the membrane. It catalyses the reaction S-ubiquitinyl-[E2 ubiquitin-conjugating enzyme]-L-cysteine + [acceptor protein]-L-lysine = [E2 ubiquitin-conjugating enzyme]-L-cysteine + N(6)-ubiquitinyl-[acceptor protein]-L-lysine.. The protein operates within protein modification; protein ubiquitination. Its function is as follows. E3 ubiquitin-protein ligase able to catalyze polyubiquitination with ubiquitin-conjugating enzyme E2 UBC8 in vitro. May be involved in the plant C/N response and the early steps of the plant defense signaling pathway. The sequence is that of E3 ubiquitin-protein ligase ATL6 (ATL6) from Arabidopsis thaliana (Mouse-ear cress).